Consider the following 323-residue polypeptide: 3-dehydroquinate synthase (323 aa).

The protein belongs to the archaeal-type DHQ synthase family.

It catalyses the reaction 2-amino-2,3,7-trideoxy-D-lyxo-hept-6-ulosonate + NAD(+) + H2O = 3-dehydroquinate + NH4(+) + NADH + H(+). Functionally, catalyzes the oxidative deamination and cyclization of 2-amino-3,7-dideoxy-D-threo-hept-6-ulosonic acid (ADH) to yield 3-dehydroquinate (DHQ), which is fed into the canonical shikimic pathway of aromatic amino acid biosynthesis. This chain is 3-dehydroquinate synthase, found in Archaeoglobus fulgidus (strain ATCC 49558 / DSM 4304 / JCM 9628 / NBRC 100126 / VC-16).